An 866-amino-acid chain; its full sequence is Thiamine diphosphate dependent-3-acetyloctanal synthase PigD (866 aa).

Residues 826-866 form a disordered region; sequence KGWQRDPSDREALQERKDWAARQPESTSTSFDQGQNKEAIS. The span at 828–845 shows a compositional bias: basic and acidic residues; it reads WQRDPSDREALQERKDWA. Residues 849 to 866 show a composition bias toward polar residues; sequence PESTSTSFDQGQNKEAIS.

The protein belongs to the TPP enzyme family. Thiamine diphosphate is required as a cofactor.

The enzyme catalyses (2E)-octenal + pyruvate + H(+) = (S)-3-acetyloctanal + CO2. It functions in the pathway antibiotic biosynthesis; prodigiosin biosynthesis. Functionally, involved in the biosynthesis of 2-methyl-3-n-amyl-pyrrole (MAP), one of the terminal products involved in the biosynthesis of the red antibiotic prodigiosin (Pig). Catalyzes the decarboxylation of pyruvate, followed by the modification of the resulting two-carbon fragment acetaldehyde at the C3 position of the 2-octenal (1,2-addition of acetaldehyde) giving 3-acetyloctanal. This chain is Thiamine diphosphate dependent-3-acetyloctanal synthase PigD, found in Serratia sp. (strain ATCC 39006) (Prodigiosinella confusarubida).